The primary structure comprises 255 residues: Type III pantothenate kinase (255 aa).

6-13 provides a ligand contact to ATP; sequence DVGNTNTV. Substrate contacts are provided by residues Tyr-100 and 107-110; that span reads GADR. The active-site Proton acceptor is the Asp-109. Asp-129 provides a ligand contact to K(+). Position 132 (Thr-132) interacts with ATP. Thr-184 is a binding site for substrate.

Belongs to the type III pantothenate kinase family. Homodimer. It depends on NH4(+) as a cofactor. The cofactor is K(+).

The protein resides in the cytoplasm. The catalysed reaction is (R)-pantothenate + ATP = (R)-4'-phosphopantothenate + ADP + H(+). It functions in the pathway cofactor biosynthesis; coenzyme A biosynthesis; CoA from (R)-pantothenate: step 1/5. In terms of biological role, catalyzes the phosphorylation of pantothenate (Pan), the first step in CoA biosynthesis. The chain is Type III pantothenate kinase from Acetivibrio thermocellus (strain ATCC 27405 / DSM 1237 / JCM 9322 / NBRC 103400 / NCIMB 10682 / NRRL B-4536 / VPI 7372) (Clostridium thermocellum).